The sequence spans 291 residues: Protease HtpX (291 aa).

The next 2 membrane-spanning stretches (helical) occupy residues 4-24 (VLLFLATNLAVMLVLSIVLSV) and 37-57 (GGLLLMAAVFGFGGSIISLLM). H143 contacts Zn(2+). Residue E144 is part of the active site. H147 contacts Zn(2+). 2 helical membrane-spanning segments follow: residues 158 to 178 (LIQGVVNTFVIYISRVLAGIV) and 198 to 218 (FAISMVFELIFGILASTIVMW). Residue E224 participates in Zn(2+) binding.

It belongs to the peptidase M48B family. Zn(2+) serves as cofactor.

It localises to the cell inner membrane. The polypeptide is Protease HtpX (Tolumonas auensis (strain DSM 9187 / NBRC 110442 / TA 4)).